A 249-amino-acid chain; its full sequence is CDP-diacylglycerol pyrophosphatase (249 aa).

A helical membrane pass occupies residues 5–25; sequence GYFLLAVIVIVAAAGVGYWKF.

Belongs to the Cdh family.

Its subcellular location is the cell inner membrane. It carries out the reaction a CDP-1,2-diacyl-sn-glycerol + H2O = a 1,2-diacyl-sn-glycero-3-phosphate + CMP + 2 H(+). It participates in phospholipid metabolism; CDP-diacylglycerol degradation; phosphatidate from CDP-diacylglycerol: step 1/1. This chain is CDP-diacylglycerol pyrophosphatase, found in Salmonella arizonae (strain ATCC BAA-731 / CDC346-86 / RSK2980).